A 358-amino-acid polypeptide reads, in one-letter code: Branched-chain amino acid aminotransferase gloG (358 aa).

Arg-91 provides a ligand contact to pyridoxal 5'-phosphate. Lys-195 acts as the Proton acceptor in catalysis. Lys-195 is subject to N6-(pyridoxal phosphate)lysine. Glu-231 contributes to the pyridoxal 5'-phosphate binding site.

This sequence belongs to the class-IV pyridoxal-phosphate-dependent aminotransferase family. It depends on pyridoxal 5'-phosphate as a cofactor.

It catalyses the reaction L-isoleucine + 2-oxoglutarate = (S)-3-methyl-2-oxopentanoate + L-glutamate. The catalysed reaction is L-leucine + 2-oxoglutarate = 4-methyl-2-oxopentanoate + L-glutamate. The enzyme catalyses L-valine + 2-oxoglutarate = 3-methyl-2-oxobutanoate + L-glutamate. It functions in the pathway mycotoxin biosynthesis. Its function is as follows. Branched-chain amino acid aminotransferase; part of the gene cluster that mediates the biosynthesis of pneumocandins, lipohexapeptides of the echinocandin family that prevent fungal cell wall formation by non-competitive inhibition of beta-1,3-glucan synthase. The 10,12-dimethylmyristoyl side chain is synthesized by the reducing polyketide synthase gloL/GLPKS4. The thioesterase gloN/GLHYD exclusively interacts with gloL/GLPKS4 to maintain turnover of the polyketide side chain. The 10R,12S-dimethylmyristic acid is then transferred to the first thiolation domain of the nonribosomal peptide synthetase gloA/GLNRPS4 by the acyl-AMP ligase gloD/GLligase, followed by its acylation to L-ornithine to trigger elongation of the cyclic hexapeptide. L-ornithine, 4R-hydroxyl-L-proline (generated from L-proline by the dioxygenase gloF/GLOXY2), 3S-hydroxyl-L-homotyrosine (generated by gloG/GLHtyB, gloH/GLHtyA, gloI/GLHtyC, gloJ/GLHtyD and hydroxylated at C-3 by the dioxygenase gloM/GLOXY1), 3R-hydroxyl-L-glutamine (generated from L-glutamine probably by the dioxygenase gloE/GLOXY3) and 3S-hydroxyl-L-proline (generated from L-proline by the dioxygenase gloF/GLOXY2 to yield pneumocandin B0), or 3S-hydroxyl-4S-methyl-L-proline (generated from L-leucine by the dioxygenase gloC/GLOXY4 to yield pneumocandin A0) are sequentially added to the growing chain. The last C domain of gloA/GLNRPS4 is proposed to be responsible for cyclization by condensation to form the peptide bond between L-ornithine and 3S-hydroxyl-4S-methyl-L-proline (for pneumocandin A0) or 3S-hydroxyl-L-proline (for pneumocandin B0). Finally, the subsequent C-4 hydroxylation of 3S-hydroxyl-L-homotyrosine and L-ornithine dihydroxylation at C-4 and C-5 are performed by the cytochrome P450 monooxygenases gloP/GLP450-1 and gloO/GLP450-2, respectively. This Glarea lozoyensis (strain ATCC 20868 / MF5171) protein is Branched-chain amino acid aminotransferase gloG.